The sequence spans 468 residues: MTSQLHKKGEAWSARFSEPMSELVKRYTSSVFFDKRLALVDIEGSLAHASMLAAQKIIAADDLAAIQRGMAQIKGEIERGEFEWQLDLEDVHLNIEARLTALIGDAGKRLHTGRSRNDQVATDIRLWLRGEIDRIGGLLTELRTALLDMAEKNASTIMPGFTHLQVAQPVTFGHHLLAYVEMFSRDAERMIDCRKRVNRLPLGAAALAGTSYPIDRHAVAKTLGFDGICANSLDAVSDRDFAIEFTAASALVMTHVSRFSEELVLWMSPRVGFIDLADRFCTGSSIMPQKKNPDVPELARGKTGRVNGHLIALLTLMKGQPLAYNKDNQEDKEPLFDTVDTVADTLRIFAEMVAGISVKPQAMRDAALQGFSTATDLADYLVKRGLPFRDAHEAVALAVRVCADRGCDLADLTLEEMRKELPNVAHLIGEDVFSYLTLEGSVASRNHPGGTAPEQVLAAVKAARAALK.

Belongs to the lyase 1 family. Argininosuccinate lyase subfamily.

It is found in the cytoplasm. The enzyme catalyses 2-(N(omega)-L-arginino)succinate = fumarate + L-arginine. It participates in amino-acid biosynthesis; L-arginine biosynthesis; L-arginine from L-ornithine and carbamoyl phosphate: step 3/3. The protein is Argininosuccinate lyase of Paraburkholderia phytofirmans (strain DSM 17436 / LMG 22146 / PsJN) (Burkholderia phytofirmans).